Reading from the N-terminus, the 316-residue chain is HPr kinase/phosphorylase (316 aa).

Active-site residues include histidine 146 and lysine 167. 161-168 (GESGLGKS) lines the ATP pocket. Serine 168 is a binding site for Mg(2+). Aspartate 185 (proton acceptor; for phosphorylation activity. Proton donor; for dephosphorylation activity) is an active-site residue. Residues 209 to 218 (LEVRGIGLLD) form an important for the catalytic mechanism of both phosphorylation and dephosphorylation region. Mg(2+) is bound at residue glutamate 210. Residue arginine 252 is part of the active site. Residues 273 to 278 (QVEAGR) form an important for the catalytic mechanism of dephosphorylation region.

It belongs to the HPrK/P family. In terms of assembly, homohexamer. Mg(2+) serves as cofactor.

It catalyses the reaction [HPr protein]-L-serine + ATP = [HPr protein]-O-phospho-L-serine + ADP + H(+). The enzyme catalyses [HPr protein]-O-phospho-L-serine + phosphate + H(+) = [HPr protein]-L-serine + diphosphate. In terms of biological role, catalyzes the ATP- as well as the pyrophosphate-dependent phosphorylation of a specific serine residue in HPr, a phosphocarrier protein of the phosphoenolpyruvate-dependent sugar phosphotransferase system (PTS). HprK/P also catalyzes the pyrophosphate-producing, inorganic phosphate-dependent dephosphorylation (phosphorolysis) of seryl-phosphorylated HPr (P-Ser-HPr). The protein is HPr kinase/phosphorylase of Polaromonas sp. (strain JS666 / ATCC BAA-500).